Reading from the N-terminus, the 1638-residue chain is Ciliary rootlet coiled-coil protein 2 (1638 aa).

The segment covering 1–20 has biased composition (polar residues); sequence MSSTSSNPDDGDTTEQSQLG. Disordered stretches follow at residues 1 to 21, 39 to 92, 396 to 423, and 1168 to 1213; these read MSSTSSNPDDGDTTEQSQLGL, REDR…REES, ARLRSPPRSVSPHQRMSPARTSSPTSLH, and TRRK…NLQE. The segment covering 67 to 82 has biased composition (low complexity); it reads SSSLGEEPLSGLREPP. The stretch at 85 to 144 forms a coiled coil; the sequence is TSHAREESELLQEELTRLEDLLAQADAEREELASRCHMVSQRLQARLDTTEARLRKSELE. The span at 406 to 421 shows a compositional bias: polar residues; that stretch reads SPHQRMSPARTSSPTS. 2 coiled-coil regions span residues 426–1234 and 1281–1315; these read LQAV…VQKE and LQEASNQADSLQRSLDNACSRVHVLEQELAKAEGA. Residues 1180-1193 are compositionally biased toward basic and acidic residues; the sequence is RTLEAENQRKRQEV. Disordered stretches follow at residues 1338-1383 and 1506-1551; these read RNLL…VPVD and ALEE…QTTS. A compositionally biased stretch (polar residues) spans 1349-1371; the sequence is SPTTGSSQTRPGRQRTSPPTRSY. 2 coiled-coil regions span residues 1412–1506 and 1542–1576; these read RDNS…LRQA and RRALREQTTSLRTERARLQGELAALRTRLIQTEQE.

Belongs to the rootletin family.

This chain is Ciliary rootlet coiled-coil protein 2, found in Mus musculus (Mouse).